The chain runs to 380 residues: Cytochrome b (380 aa).

4 helical membrane-spanning segments follow: residues 34-54, 78-99, 114-134, and 179-199; these read FGSL…LLAM, WLIR…YMHI, WNTG…GYVL, and FFAL…IHLT. Heme b is bound by residues H84 and H98. Heme b is bound by residues H183 and H197. H202 is a binding site for a ubiquinone. The next 4 helical transmembrane spans lie at 227–247, 289–309, 321–341, and 348–368; these read LKDI…ALFS, LGGV…PFLH, LSQS…WIGS, and FIII…ILFP.

Belongs to the cytochrome b family. As to quaternary structure, the cytochrome bc1 complex contains 11 subunits: 3 respiratory subunits (MT-CYB, CYC1 and UQCRFS1), 2 core proteins (UQCRC1 and UQCRC2) and 6 low-molecular weight proteins (UQCRH/QCR6, UQCRB/QCR7, UQCRQ/QCR8, UQCR10/QCR9, UQCR11/QCR10 and a cleavage product of UQCRFS1). This cytochrome bc1 complex then forms a dimer. The cofactor is heme b.

The protein localises to the mitochondrion inner membrane. Component of the ubiquinol-cytochrome c reductase complex (complex III or cytochrome b-c1 complex) that is part of the mitochondrial respiratory chain. The b-c1 complex mediates electron transfer from ubiquinol to cytochrome c. Contributes to the generation of a proton gradient across the mitochondrial membrane that is then used for ATP synthesis. This Oceanodroma tristrami (Tristram's storm-petrel) protein is Cytochrome b (MT-CYB).